The primary structure comprises 119 residues: Ribosome-binding factor A (119 aa).

This sequence belongs to the RbfA family. As to quaternary structure, monomer. Binds 30S ribosomal subunits, but not 50S ribosomal subunits or 70S ribosomes.

Its subcellular location is the cytoplasm. Functionally, one of several proteins that assist in the late maturation steps of the functional core of the 30S ribosomal subunit. Associates with free 30S ribosomal subunits (but not with 30S subunits that are part of 70S ribosomes or polysomes). Required for efficient processing of 16S rRNA. May interact with the 5'-terminal helix region of 16S rRNA. This Ligilactobacillus salivarius (strain UCC118) (Lactobacillus salivarius) protein is Ribosome-binding factor A.